The chain runs to 859 residues: Volume-regulated anion channel subunit LRRC8D (859 aa).

Residues methionine 1 to proline 22 are Cytoplasmic-facing. A helical transmembrane segment spans residues tryptophan 23 to threonine 48. Topologically, residues lysine 49 to lysine 164 are extracellular. An intrachain disulfide couples cysteine 54 to cysteine 355. Residues isoleucine 110–arginine 138 form a disordered region. Positions glutamate 127–arginine 138 are enriched in basic and acidic residues. A helical membrane pass occupies residues tyrosine 165–phenylalanine 183. The Cytoplasmic segment spans residues tryptophan 184 to tyrosine 309. Positions serine 222–threonine 252 are disordered. The span at arginine 228–threonine 252 shows a compositional bias: polar residues. 3 positions are modified to phosphoserine: serine 242, serine 243, and serine 247. Residues valine 310–valine 331 form a helical membrane-spanning segment. Topologically, residues asparagine 332–tyrosine 361 are extracellular. Residues methionine 362–tryptophan 387 form a helical membrane-spanning segment. Over leucine 388–isoleucine 859 the chain is Cytoplasmic. LRR repeat units lie at residues asparagine 515–phenylalanine 535, histidine 539–leucine 560, asparagine 562–glutamate 583, histidine 590–valine 610, histidine 613–lysine 633, asparagine 637–leucine 658, asparagine 660–glutamine 681, arginine 685–valine 706, asparagine 708–leucine 729, lysine 731–leucine 752, asparagine 754–cysteine 775, lysine 777–leucine 798, and glutamine 800–cysteine 821.

The protein belongs to the LRRC8 family. Heterohexamer; oligomerizes with other LRRC8 proteins (LRRC8A, LRRC8B, LRRC8C and/or LRRC8E) to form a heterohexamer. In vivo, the subunit composition may depend primarily on expression levels, and heterooligomeric channels containing various proportions of the different LRRC8 proteins may coexist. As to expression, expressed in pancreatic beta cells. Also expressed in glucagon-secreting pancreatic alpha cells.

Its subcellular location is the cell membrane. The protein localises to the endoplasmic reticulum membrane. The catalysed reaction is chloride(in) = chloride(out). It catalyses the reaction iodide(out) = iodide(in). It carries out the reaction taurine(out) = taurine(in). In terms of biological role, non-essential component of the volume-regulated anion channel (VRAC, also named VSOAC channel), an anion channel required to maintain a constant cell volume in response to extracellular or intracellular osmotic changes. The VRAC channel conducts iodide better than chloride and can also conduct organic osmolytes like taurine. Plays a redundant role in the efflux of amino acids, such as aspartate, in response to osmotic stress family member (LRRC8B, LRRC8C, LRRC8D or LRRC8E); channel characteristics depend on the precise subunit composition. Also acts as a regulator of glucose-sensing in pancreatic beta cells: VRAC currents, generated in response to hypotonicity- or glucose-induced beta cell swelling, depolarize cells, thereby causing electrical excitation, leading to increase glucose sensitivity and insulin secretion. VRAC channels containing LRRC8D inhibit transport of immunoreactive cyclic dinucleotide GMP-AMP (2'-3'-cGAMP), an immune messenger produced in response to DNA virus in the cytosol. The polypeptide is Volume-regulated anion channel subunit LRRC8D (Mus musculus (Mouse)).